Reading from the N-terminus, the 158-residue chain is Cysteine proteinase inhibitor 4 (158 aa).

The first 24 residues, 1-24, serve as a signal peptide directing secretion; the sequence is MAARCPVGVASVLLLIVLVTVASA. The interval 26-51 is disordered; the sequence is SGARSGGGGGGGIRELRGGGAGRRVG. Gly residues predominate over residues 29–49; the sequence is RSGGGGGGGIRELRGGGAGRR. Residues 51-116 enclose the Cystatin domain; that stretch reads GGRTEVRDVE…KYYLRVAAAE (66 aa). Residues 101 to 105 carry the Secondary area of contact motif; that stretch reads QVVSG.

Belongs to the cystatin family. Phytocystatin subfamily.

It localises to the secreted. Its function is as follows. Specific inhibitor of cysteine proteinases. Probably involved in the regulation of endogenous processes and in defense against pests and pathogens. In Oryza sativa subsp. japonica (Rice), this protein is Cysteine proteinase inhibitor 4.